Consider the following 227-residue polypeptide: Cytochrome c oxidase subunit 2 (227 aa).

Residues methionine 1 to serine 14 lie on the Mitochondrial intermembrane side of the membrane. A helical membrane pass occupies residues proline 15–methionine 45. The Mitochondrial matrix segment spans residues leucine 46–glutamine 59. Residues glutamate 60 to methionine 87 traverse the membrane as a helical segment. Over aspartate 88–leucine 227 the chain is Mitochondrial intermembrane. Cu cation-binding residues include histidine 161, cysteine 196, glutamate 198, cysteine 200, histidine 204, and methionine 207. Position 198 (glutamate 198) interacts with Mg(2+). Tyrosine 218 is subject to Phosphotyrosine.

It belongs to the cytochrome c oxidase subunit 2 family. Component of the cytochrome c oxidase (complex IV, CIV), a multisubunit enzyme composed of 14 subunits. The complex is composed of a catalytic core of 3 subunits MT-CO1, MT-CO2 and MT-CO3, encoded in the mitochondrial DNA, and 11 supernumerary subunits COX4I, COX5A, COX5B, COX6A, COX6B, COX6C, COX7A, COX7B, COX7C, COX8 and NDUFA4, which are encoded in the nuclear genome. The complex exists as a monomer or a dimer and forms supercomplexes (SCs) in the inner mitochondrial membrane with NADH-ubiquinone oxidoreductase (complex I, CI) and ubiquinol-cytochrome c oxidoreductase (cytochrome b-c1 complex, complex III, CIII), resulting in different assemblies (supercomplex SCI(1)III(2)IV(1) and megacomplex MCI(2)III(2)IV(2)). Found in a complex with TMEM177, COA6, COX18, COX20, SCO1 and SCO2. Interacts with TMEM177 in a COX20-dependent manner. Interacts with COX20. Interacts with COX16. It depends on Cu cation as a cofactor.

It localises to the mitochondrion inner membrane. The catalysed reaction is 4 Fe(II)-[cytochrome c] + O2 + 8 H(+)(in) = 4 Fe(III)-[cytochrome c] + 2 H2O + 4 H(+)(out). Its function is as follows. Component of the cytochrome c oxidase, the last enzyme in the mitochondrial electron transport chain which drives oxidative phosphorylation. The respiratory chain contains 3 multisubunit complexes succinate dehydrogenase (complex II, CII), ubiquinol-cytochrome c oxidoreductase (cytochrome b-c1 complex, complex III, CIII) and cytochrome c oxidase (complex IV, CIV), that cooperate to transfer electrons derived from NADH and succinate to molecular oxygen, creating an electrochemical gradient over the inner membrane that drives transmembrane transport and the ATP synthase. Cytochrome c oxidase is the component of the respiratory chain that catalyzes the reduction of oxygen to water. Electrons originating from reduced cytochrome c in the intermembrane space (IMS) are transferred via the dinuclear copper A center (CU(A)) of subunit 2 and heme A of subunit 1 to the active site in subunit 1, a binuclear center (BNC) formed by heme A3 and copper B (CU(B)). The BNC reduces molecular oxygen to 2 water molecules using 4 electrons from cytochrome c in the IMS and 4 protons from the mitochondrial matrix. The sequence is that of Cytochrome c oxidase subunit 2 (MT-CO2) from Rousettus leschenaultii (Leschenault's rousette).